The sequence spans 466 residues: Uronate isomerase (466 aa).

The protein belongs to the metallo-dependent hydrolases superfamily. Uronate isomerase family.

It catalyses the reaction D-glucuronate = D-fructuronate. The enzyme catalyses aldehydo-D-galacturonate = keto-D-tagaturonate. The protein operates within carbohydrate metabolism; pentose and glucuronate interconversion. This chain is Uronate isomerase, found in Clostridium perfringens (strain 13 / Type A).